The following is a 2053-amino-acid chain: MFGGQFGSFGAKPAATASPFGAPSAAPTTSLFGSTAPSSGFGGFGSTAQTTQPTTGGFGGFGGFGGATTTQQPAASPFGGGGTGGSGLFGSSAQTTTQQPGASPFGGGFGTTTTTTTQQPGASPFGGTGGGLFGSSAQTTTQQQGASPFGGFGGATTTQPSLLSGATGGFGGFGGSTTSGTQLGGGGGATSGAFGGSSSPFGGSGGATTSSPFGGGGGSFGATTQKQYGTPIPYQQTTIEGNTFVSISAMPQYNDRSFEELRFEDITHRKDIVYKTGGGSGGGNSLFGSTPTTQPSSPFGAQTTTQTTGGLFGGQTTTSPFGGQTSATPGSSLFGSTQPTQQQTSGGLFGSVQPTQQQAGGGLFGSMPSTGGSSLFGSTQPTQQQTGGAQPTQSLFGGQTQTTTSPFGSQTSTPFGQPQQTNTGSGLFGAQQTQQTNTGGGLFGAQPTQQTSGGGLFGTQPTSGTGLFGTSPTAGGTGLFGTTQPTSQGTGLFGTTQPTTQGTGLFGTSPTSGTGLFGSTPTSGTGLFGSTPTSGTGLFGSAQPPQNQQSQTSLFGNTGTGATNTGTGLFGSAQPSSNPGGGLFGSAQPSTTTGGLFGSNQPTAQPTTSLFGNTTGSVGGLGATPNITSGLFGSNPAQTGGLFGSTQPTTQTSLFGNTGSTGGLGAQNGGGLFGNLSQPTATAGQGLSGGLFGNLSQPTATAGQGLSSGGLFGNTLLGQPSTQGLSSALPTLGLGLMGGQPQQTQQLPQGSLMLQQTQQPLQQQPLQQQQQPLQQSTIQLNNQINSASPYFPISSPAPFATFVKDLTSTSKVVSPPSYTQRSLSHHGYIPKSTTKLVPRRGPNNVDLGFSVIQNQNGLFPIDKFITKHSKSLNINTTNETEDTLRSLNTKSSSLFNNNNNNNNNNNNRNVNTNVNDYQNNGLPSSSLYNSNINQLSNNNNNNNNIYNNNNNNNINNNNNNNNISTQFNLRNNQSSSDNLNNDKSLSSSSSNKSQQQQQKEQKEEQPPKPIKEKEFINPNAPKLTRDGYQCVPSIKELSKKTDKELSSVQGFTISRDGCGSIYFPGSTNLVALDLDDIVDIEPREVSVYKDEETKPEIGYGLNRDAVVTLENCWPKNKNGEVVKEDGTILDKYENALKKVSAKSDCGFVSYSRSNGTWVFTVKHFSKYSAPDFDEDDQQMQQQTQQKQQQTQPSKVTFQQPSTKLTKPKFTANLDNFDSDSETSSGDENQDEMVPQKKTPFIKRVSNRESGLFDTPSVVPMSEKIETTPSKIARVSEPTSQSSRMSNNALKFSTFNPQQQQLQSSRFKSTGLSILSNPVKNLIQSDVNNEQSMFSNTTTTSTTRIQPLPSQQHLVQPIPTTISLNKNYFSKVRIDPQVYDRIVPKEESITNQYRMKNERLNHSTQDVSLFMRRSFRVGWAPGGKLISITKSSFKNLLIKKLPTDTKEDKKESIIKFLKNHHSHSSLVPENLKSIGWFSISNVQEQIESQLTLNVPSSQSVYYNRIWSLISNLWGNVLKGNGSKYINTNYSEDTIRKLNLNQWLKDVIAPLLRDEMDSLRKKTNSNYLEQIFSYLSAKQIKEASDLANENKDFRLATMMSQIWSSSESGKELILKQLTTYHSNGSDEFINEKRLEILHLIAGSVNKIYKNLNDWIRCFAVSFWFKYSLEYSIEDSVENFERSFNAHRSVYPLPPYLIKSTSTNSKQIEEQQHYYDICFLLLKLFAVNRGSSHFDKFKNIFYPENIGQDLLDYHLSWNLYTVLKSIPSLNKQPDLVNASNLHSSFALQLERLGLWQWSIYVLLHTPDQSNHVREEAVKSLIARAAPVITSEDRVFLTTKLHIPEIWIDEAKAWYSGYDCNNDIYDQIDALFKSYQYTKIHDIIFSNIGPNYIIQKRYHSLKDLLIRLEPHSSFISTWRYGGSIFLEFADICIQYKEILSQLSNTAEEIQRTKYYVNLKDITTRIVNILSDISKITQSSEIKNTSASYKQSLSFMSEALITKASLLRDLPESIVKLVSTNNLVSTLNSLPLTQDYRSKNLESLTDQIQDTLLNSIYQ.

Disordered regions lie at residues 43–222 (GFGS…SFGA), 274–617 (YKTG…TTGS), 638–662 (QTGGLFGSTQPTTQTSLFGNTGSTG), 890–1027 (KSSS…TRDG), and 1170–1243 (PDFD…FIKR). Low complexity predominate over residues 46–55 (STAQTTQPTT). Positions 56–66 (GGFGGFGGFGG) are enriched in gly residues. Low complexity predominate over residues 67-77 (ATTTQQPAASP). The span at 78 to 88 (FGGGGTGGSGL) shows a compositional bias: gly residues. The segment covering 111 to 123 (TTTTTTTQQPGAS) has biased composition (low complexity). Over residues 124–133 (PFGGTGGGLF) the composition is skewed to gly residues. Positions 134–147 (GSSAQTTTQQQGAS) are enriched in low complexity. Positions 166 to 195 (ATGGFGGFGGSTTSGTQLGGGGGATSGAFG) are enriched in gly residues. Over residues 196–212 (GSSSPFGGSGGATTSSP) the composition is skewed to low complexity. The span at 276–285 (TGGGSGGGNS) shows a compositional bias: gly residues. A compositionally biased stretch (polar residues) spans 290–299 (TPTTQPSSPF). The segment covering 300-318 (GAQTTTQTTGGLFGGQTTT) has biased composition (low complexity). A compositionally biased stretch (polar residues) spans 319–334 (SPFGGQTSATPGSSLF). Low complexity predominate over residues 335–346 (GSTQPTQQQTSG). Over residues 367 to 378 (MPSTGGSSLFGS) the composition is skewed to polar residues. Positions 379 to 393 (TQPTQQQTGGAQPTQ) are enriched in low complexity. Composition is skewed to polar residues over residues 394–425 (SLFGGQTQTTTSPFGSQTSTPFGQPQQTNTGS) and 459–488 (TQPTSGTGLFGTSPTAGGTGLFGTTQPTSQ). The span at 489-508 (GTGLFGTTQPTTQGTGLFGT) shows a compositional bias: low complexity. Polar residues-rich tracts occupy residues 509–536 (SPTSGTGLFGSTPTSGTGLFGSTPTSGT) and 543–555 (QPPQNQQSQTSLF). Over residues 556 to 567 (GNTGTGATNTGT) the composition is skewed to low complexity. Polar residues-rich tracts occupy residues 587–616 (AQPSTTTGGLFGSNQPTAQPTTSLFGNTTG) and 638–658 (QTGGLFGSTQPTTQTSLFGNT). Composition is skewed to low complexity over residues 896-964 (NNNN…NNIS) and 971-998 (NNQSSSDNLNNDKSLSSSSSNKSQQQQQ). Residues 999-1015 (KEQKEEQPPKPIKEKEF) are compositionally biased toward basic and acidic residues. Positions 1025–1164 (RDGYQCVPSI…GTWVFTVKHF (140 aa)) constitute a Peptidase S59 domain. Residues 1178–1191 (QMQQQTQQKQQQTQ) are compositionally biased toward low complexity. The span at 1192–1204 (PSKVTFQQPSTKL) shows a compositional bias: polar residues.

It belongs to the nucleoporin GLFG family. Nup98 interacts directly with Nup96. Autoproteolytically cleaved to yield Nup98 and Nup96 or Nup98 only, respectively.

Its subcellular location is the nucleus. It is found in the nuclear pore complex. The protein resides in the nucleus membrane. In terms of biological role, nup98 and Nup96 play a role in the bidirectional transport across the nucleoporin complex (NPC). The repeat domain in Nup98 has a direct role in the transport. This is Nuclear pore complex protein Nup98-Nup96 (nup98) from Dictyostelium discoideum (Social amoeba).